Consider the following 754-residue polypeptide: Probable TonB-dependent siderophore receptor PirA (754 aa).

A signal peptide spans 1-24; sequence MSKRIIQSVLSVSVLASMMSMAFA. The TBDR plug domain occupies 54 to 181; the sequence is EQVKQSLGVS…AGGVVNIITK (128 aa). Residues 186-754 form the TBDR beta-barrel domain; the sequence is ETHGSVEFYT…AYYASLKYSF (569 aa). A compositionally biased stretch (polar residues) spans 404 to 414; the sequence is VSTTQGKDSSG. Positions 404–424 are disordered; it reads VSTTQGKDSSGSGYGDQLAKG. Residues C511 and C519 are joined by a disulfide bond. Residues 737–754 carry the TonB C-terminal box motif; it reads QTYNEPGRAYYASLKYSF.

It belongs to the TonB-dependent receptor family.

Its subcellular location is the cell outer membrane. Its function is as follows. Probably involved in the initial step of iron uptake by binding iron chelating siderophores, thereby allowing extraction of iron from the environment. May bind the siderophore, ferric enterobactin, with micromolar affinity. This chain is Probable TonB-dependent siderophore receptor PirA, found in Acinetobacter baumannii (strain ATCC 19606 / DSM 30007 / JCM 6841 / CCUG 19606 / CIP 70.34 / NBRC 109757 / NCIMB 12457 / NCTC 12156 / 81).